The primary structure comprises 281 residues: Hydroxyethylthiazole kinase (281 aa).

ATP-binding residues include Arg124 and Ser169.

The protein belongs to the Thz kinase family. The cofactor is Mg(2+).

The enzyme catalyses 5-(2-hydroxyethyl)-4-methylthiazole + ATP = 4-methyl-5-(2-phosphooxyethyl)-thiazole + ADP + H(+). It participates in cofactor biosynthesis; thiamine diphosphate biosynthesis; 4-methyl-5-(2-phosphoethyl)-thiazole from 5-(2-hydroxyethyl)-4-methylthiazole: step 1/1. Functionally, catalyzes the phosphorylation of the hydroxyl group of 4-methyl-5-beta-hydroxyethylthiazole (THZ). The protein is Hydroxyethylthiazole kinase of Rhodococcus erythropolis (strain PR4 / NBRC 100887).